The primary structure comprises 102 residues: MSQFDHQHLSDTEEKQELKPPSMYKVIINNDDYTPMDFVIEVLMRFFKMDQERATDTMLQVHYKGKAVCGVYSAEIAETKVVQVNQYARENQHPLLCTMEQE.

Positions 1–18 (MSQFDHQHLSDTEEKQEL) are enriched in basic and acidic residues. The segment at 1 to 21 (MSQFDHQHLSDTEEKQELKPP) is disordered.

Belongs to the ClpS family. Binds to the N-terminal domain of the chaperone ClpA.

Functionally, involved in the modulation of the specificity of the ClpAP-mediated ATP-dependent protein degradation. The sequence is that of ATP-dependent Clp protease adapter protein ClpS from Idiomarina loihiensis (strain ATCC BAA-735 / DSM 15497 / L2-TR).